Reading from the N-terminus, the 235-residue chain is Small ribosomal subunit protein uS3 (235 aa).

Residues 39 to 107 (VRLFLRKELF…PTQINIAEIR (69 aa)) enclose the KH type-2 domain.

Belongs to the universal ribosomal protein uS3 family. As to quaternary structure, part of the 30S ribosomal subunit. Forms a tight complex with proteins S10 and S14.

Functionally, binds the lower part of the 30S subunit head. Binds mRNA in the 70S ribosome, positioning it for translation. The protein is Small ribosomal subunit protein uS3 of Buchnera aphidicola subsp. Baizongia pistaciae (strain Bp).